The chain runs to 1233 residues: uncharacterized protein (1233 aa).

Disordered stretches follow at residues 1 to 39 (MVES…PSTN), 65 to 116 (QELS…DAIS), 160 to 211 (AEGT…TDLS), 250 to 577 (EKMD…DAPR), 594 to 825 (DLEV…NSEK), 851 to 872 (NKEN…NSEK), and 902 to 955 (EDVE…ENSK). The segment covering 72-83 (KSSKLKGHKKKN) has biased composition (basic residues). Ser-180 carries the post-translational modification Phosphoserine. Positions 183 to 199 (TRRKKNKKKKTTNRRGR) are enriched in basic residues. Over residues 201–211 (SSNPADTTDLS) the composition is skewed to polar residues. 2 stretches are compositionally biased toward basic and acidic residues: residues 250 to 280 (EKMD…ETSS) and 287 to 300 (NEEK…REEN). Over residues 329–345 (GQASTKDVESESLTKNG) the composition is skewed to polar residues. 2 stretches are compositionally biased toward basic and acidic residues: residues 349–370 (KENE…DRDG) and 379–408 (NQKE…ELSV). Polar residues predominate over residues 409-422 (NHENNMSHNFNAAG). The residue at position 462 (Ser-462) is a Phosphoserine. Acidic residues predominate over residues 466–478 (EKEEEEEEEEEEN). Basic and acidic residues-rich tracts occupy residues 484 to 497 (VKKE…EAVR), 508 to 527 (STSK…EAGE), 594 to 622 (DLEV…DKIA), 631 to 672 (EDMK…KTPE), and 684 to 711 (RPED…DVKP). Position 523 is a phosphoserine (Ser-523). Polar residues predominate over residues 728 to 739 (QRVQISTEQAET). The segment covering 753-783 (FKEEEKPKRFEITQEGDKITGKDTNHEHGEA) has biased composition (basic and acidic residues). Residues 855 to 868 (EDVEVDTEEDAEVE) show a composition bias toward acidic residues. A Phosphothreonine modification is found at Thr-861. Basic and acidic residues-rich tracts occupy residues 910 to 920 (SKEDIETKCSE) and 935 to 948 (EVSK…TKED). Ser-975 bears the Phosphoserine mark. 2 disordered regions span residues 984 to 1071 (LPEL…PKKA) and 1109 to 1128 (KDST…KPQD). Residues 986 to 999 (ELEKQDIKDNKGED) show a composition bias toward basic and acidic residues. Ser-1037 and Ser-1046 each carry phosphoserine. Basic and acidic residues-rich tracts occupy residues 1062-1071 (QSTRENPKKA) and 1118-1127 (QSKKNNDKPQ). The Glutaredoxin domain occupies 1132–1233 (TSEIRKLNEK…KLRELIYDTI (102 aa)).

This is an uncharacterized protein from Saccharomyces cerevisiae (strain ATCC 204508 / S288c) (Baker's yeast).